A 210-amino-acid polypeptide reads, in one-letter code: Synaptosomal-associated protein 25 (210 aa).

The segment at 1–23 is disordered; sequence MENSVENSMDPRSEQEEMQRCAD. Basic and acidic residues predominate over residues 9-20; that stretch reads MDPRSEQEEMQR. 2 t-SNARE coiled-coil homology domains span residues 23-85 and 147-209; these read DQIT…LSDL and DARE…ATKM.

This sequence belongs to the SNAP-25 family.

Its subcellular location is the synapse. The protein localises to the synaptosome. The protein resides in the cell membrane. In terms of biological role, may play an important role in the synaptic function of specific neuronal systems. Associates with proteins involved in vesicle docking and membrane fusion. The polypeptide is Synaptosomal-associated protein 25 (snap25) (Torpedo marmorata (Marbled electric ray)).